A 965-amino-acid chain; its full sequence is Phosphatidylethanolamine N-methyltransferase (965 aa).

A disordered region spans residues 1–55 (MSSSAADPFAARLNSDVRQRHPTASATSKNVEGTSQQKQQQQQQQSEANAAASRV). The Lumenal segment spans residues 1–91 (MSSSAADPFA…DPREPKNLSD (91 aa)). The span at 22–35 (PTASATSKNVEGTS) shows a compositional bias: polar residues. A compositionally biased stretch (low complexity) spans 36–45 (QQKQQQQQQQ). The chain crosses the membrane as a helical span at residues 92 to 112 (VAVLAIIALHFLAAYYLPWGV). Residues 113–115 (KRP) lie on the Cytoplasmic side of the membrane. Residues 116–136 (LFAAIFMFWRLAYNVGIGYLL) traverse the membrane as a helical segment. The Lumenal segment spans residues 137 to 201 (TIQSKYKLLV…EYNTWLTFRR (65 aa)). A helical membrane pass occupies residues 202–222 (VVDLILMCDFISYCLFAIVCA). Residues 223-229 (HKPDGEG) lie on the Cytoplasmic side of the membrane. A helical transmembrane segment spans residues 230–250 (LFMCFARWAAGITLVGFNLWV). Topologically, residues 251–279 (KLDAHRVVKDYAWYWGDFFYLIEQELTFD) are lumenal. The helical transmembrane segment at 280-300 (GVFELAPHPMYSIGYAGYYGI) threads the bilayer. The Cytoplasmic portion of the chain corresponds to 301-306 (SMMAAS). The helical transmembrane segment at 307-327 (YDVLFISIIAHAAQFAFLVIV) threads the bilayer. The Lumenal portion of the chain corresponds to 328-389 (ENPHIEKTYN…IGLKNLDFFR (62 aa)). A helical membrane pass occupies residues 390 to 410 (ITDVAIVLLCAYLAVVTMVTP). Topologically, residues 411 to 417 (NTRFYQA) are cytoplasmic. The chain crosses the membrane as a helical span at residues 418–438 (LFVLHALAWRLWYSAGLGVIL). At 439–467 (TMQSEEKMFTRHFLKYGESVGEAWRQWKG) the chain is on the lumenal side. A helical transmembrane segment spans residues 468-488 (IYHLSNCLCHASFIAASYKMY). The Cytoplasmic portion of the chain corresponds to 489–496 (EFPADWTY). The chain crosses the membrane as a helical span at residues 497 to 517 (GWALLKHVVGLSLIALQVWTA). Residues 518–573 (TSIYESLGEFGWFYGDFFFDSKRQLTYTSIYRFLNNPERVFGTAGLWGAALITWSR) are Lumenal-facing. A helical transmembrane segment spans residues 574–594 (AIFLMALAGHFLTLAFLAYVE). Topologically, residues 595–965 (KPHMQKVYGR…TTPVDSKFSE (371 aa)) are cytoplasmic.

It belongs to the class VI-like SAM-binding methyltransferase superfamily. CHO2 family.

It localises to the endoplasmic reticulum membrane. It catalyses the reaction a 1,2-diacyl-sn-glycero-3-phosphoethanolamine + S-adenosyl-L-methionine = a 1,2-diacyl-sn-glycero-3-phospho-N-methylethanolamine + S-adenosyl-L-homocysteine + H(+). It participates in phospholipid metabolism; phosphatidylcholine biosynthesis. Catalyzes the first step of the methylation pathway of phosphatidylcholine biosynthesis, the SAM-dependent methylation of phosphatidylethanolamine (PE) to phosphatidylmonomethylethanolamine (PMME). In Neurospora crassa (strain ATCC 24698 / 74-OR23-1A / CBS 708.71 / DSM 1257 / FGSC 987), this protein is Phosphatidylethanolamine N-methyltransferase.